The following is a 289-amino-acid chain: MPFPDFDPVLVQLGPLAIRWYALAYVAGILLGWRYAVAMVKNPRLWTHRPPPVTTEQVDDFILWVTLAIIVGGRLGHVLFYTPQIIWTDPLQILQIWNGGMSFHGGAIGVFLAIILFAMRNKVDLWRLGDLVAAVVPIGLFFGRVANFINGELWGRPTDAPWGVVFCNERIRETLGWCPAGEVARHPSQLYEAALEGIVLFLILRWATHGAKLLNRRGVVMGLFTTFYAVFRISLENVRQPDAGLENLPLGLTMGIYLSIPMLLFGLWLIWRGMREETPPALAPADKPA.

Helical transmembrane passes span 13–33 (LGPL…LLGW), 61–81 (FILW…VLFY), and 99–119 (GGMS…LFAM). A 1,2-diacyl-sn-glycero-3-phospho-(1'-sn-glycerol) is bound at residue arginine 144. Transmembrane regions (helical) follow at residues 218–238 (GVVM…LENV) and 250–270 (LGLT…LWLI).

Belongs to the Lgt family.

It is found in the cell inner membrane. The catalysed reaction is L-cysteinyl-[prolipoprotein] + a 1,2-diacyl-sn-glycero-3-phospho-(1'-sn-glycerol) = an S-1,2-diacyl-sn-glyceryl-L-cysteinyl-[prolipoprotein] + sn-glycerol 1-phosphate + H(+). The protein operates within protein modification; lipoprotein biosynthesis (diacylglyceryl transfer). Catalyzes the transfer of the diacylglyceryl group from phosphatidylglycerol to the sulfhydryl group of the N-terminal cysteine of a prolipoprotein, the first step in the formation of mature lipoproteins. The polypeptide is Phosphatidylglycerol--prolipoprotein diacylglyceryl transferase (Phenylobacterium zucineum (strain HLK1)).